Here is an 838-residue protein sequence, read N- to C-terminus: 1,4-alpha-glucan branching enzyme GlgB 1 (838 aa).

Positions 1 to 11 (MIPRPPSDDRA) are enriched in basic and acidic residues. Disordered stretches follow at residues 1–98 (MIPR…VSKK) and 116–142 (PVSP…SVLG). A compositionally biased stretch (low complexity) spans 29 to 57 (KKAAAAKKTAGKKATPAAKATAAKGAVTK). The Nucleophile role is filled by Asp513. Glu566 functions as the Proton donor in the catalytic mechanism. Residues 793–822 (TDGARYGGSDVTNPHPVKPEPQGRHGRPAS) are disordered.

Belongs to the glycosyl hydrolase 13 family. GlgB subfamily. As to quaternary structure, monomer.

The catalysed reaction is Transfers a segment of a (1-&gt;4)-alpha-D-glucan chain to a primary hydroxy group in a similar glucan chain.. It functions in the pathway glycan biosynthesis; glycogen biosynthesis. Catalyzes the formation of the alpha-1,6-glucosidic linkages in glycogen by scission of a 1,4-alpha-linked oligosaccharide from growing alpha-1,4-glucan chains and the subsequent attachment of the oligosaccharide to the alpha-1,6 position. The protein is 1,4-alpha-glucan branching enzyme GlgB 1 of Streptomyces avermitilis (strain ATCC 31267 / DSM 46492 / JCM 5070 / NBRC 14893 / NCIMB 12804 / NRRL 8165 / MA-4680).